The sequence spans 160 residues: 6,7-dimethyl-8-ribityllumazine synthase (160 aa).

5-amino-6-(D-ribitylamino)uracil-binding positions include Trp-27, 59–61, and 81–83; these read AIE and VVI. Residue 86-87 participates in (2S)-2-hydroxy-3-oxobutyl phosphate binding; that stretch reads QT. The active-site Proton donor is His-89. Asn-114 provides a ligand contact to 5-amino-6-(D-ribitylamino)uracil. Arg-128 provides a ligand contact to (2S)-2-hydroxy-3-oxobutyl phosphate.

It belongs to the DMRL synthase family. Homopentamer.

It carries out the reaction (2S)-2-hydroxy-3-oxobutyl phosphate + 5-amino-6-(D-ribitylamino)uracil = 6,7-dimethyl-8-(1-D-ribityl)lumazine + phosphate + 2 H2O + H(+). It functions in the pathway cofactor biosynthesis; riboflavin biosynthesis; riboflavin from 2-hydroxy-3-oxobutyl phosphate and 5-amino-6-(D-ribitylamino)uracil: step 1/2. In terms of biological role, catalyzes the formation of 6,7-dimethyl-8-ribityllumazine by condensation of 5-amino-6-(D-ribitylamino)uracil with 3,4-dihydroxy-2-butanone 4-phosphate. This is the penultimate step in the biosynthesis of riboflavin. This is 6,7-dimethyl-8-ribityllumazine synthase (ribH) from Mycobacterium tuberculosis (strain CDC 1551 / Oshkosh).